Consider the following 317-residue polypeptide: Melanocyte-stimulating hormone receptor (317 aa).

The Extracellular portion of the chain corresponds to 1-37 (MVWQGPQRRLLGSLNGTSPATPHFELAANQTGPRCLE). Asn-15 and Asn-29 each carry an N-linked (GlcNAc...) asparagine glycan. Residues 38-63 (VSIPNGLFLSLGLVSVVENVLVVAAI) traverse the membrane as a helical segment. The Cytoplasmic portion of the chain corresponds to 64-72 (AKNRNLHSP). Residues 73–93 (MYYFIGCLAVSDLLVSVTNVL) traverse the membrane as a helical segment. The Extracellular portion of the chain corresponds to 94 to 118 (ETAVMLLVEAGALAAQAAVVQQLDD). Residues 119 to 140 (IIDVLICGSMVSSLCFLGAIAV) traverse the membrane as a helical segment. Residues 141 to 163 (DRYLSIFYALRYHSIVTLPRAWR) lie on the Cytoplasmic side of the membrane. The chain crosses the membrane as a helical span at residues 164–183 (AISAIWVASVLSSTLFIAYY). Topologically, residues 184–191 (NHTAVLLC) are extracellular. A helical membrane pass occupies residues 192–211 (LVSFFVAMLVLMAVLYVHML). The Cytoplasmic segment spans residues 212-240 (ARARQHARGIARLRKRQHSVHQGFGLKGA). Residues 241–266 (ATLTILLGIFFLCWGPFFLHLSLMVL) form a helical membrane-spanning segment. Topologically, residues 267-279 (CPQHPICGCVFQN) are extracellular. The helical transmembrane segment at 280-300 (FNLFLTLIICNSIIDPFIYAF) threads the bilayer. Residues 301-317 (RSQELRKTLQEVVLCSW) are Cytoplasmic-facing. Cys-315 is lipidated: S-palmitoyl cysteine.

The protein belongs to the G-protein coupled receptor 1 family. Interacts with MGRN1, but does not undergo MGRN1-mediated ubiquitination; this interaction competes with GNAS-binding and thus inhibits agonist-induced cAMP production. Interacts with OPN3; the interaction results in a decrease in MC1R-mediated cAMP signaling and ultimately a decrease in melanin production in melanocytes.

Its subcellular location is the cell membrane. Receptor for MSH (alpha, beta and gamma) and ACTH. The activity of this receptor is mediated by G proteins which activate adenylate cyclase. Mediates melanogenesis, the production of eumelanin (black/brown) and phaeomelanin (red/yellow), via regulation of cAMP signaling in melanocytes. The chain is Melanocyte-stimulating hormone receptor (MC1R) from Canis lupus familiaris (Dog).